Here is a 293-residue protein sequence, read N- to C-terminus: Phosphatidylcholine-sterol acyltransferase (293 aa).

N-linked (GlcNAc...) asparagine glycosylation occurs at Asn-26. Residue Ser-123 is the Nucleophile of the active site. A glycan (N-linked (GlcNAc...) asparagine) is linked at Asn-179. Cys-220 and Cys-263 form a disulfide bridge. Asp-252 functions as the Charge relay system in the catalytic mechanism. Asn-280 is a glycosylation site (N-linked (GlcNAc...) asparagine). His-284 functions as the Charge relay system in the catalytic mechanism.

The protein belongs to the AB hydrolase superfamily. Lipase family.

The protein resides in the secreted. The catalysed reaction is a sterol + a 1,2-diacyl-sn-glycero-3-phosphocholine = a sterol ester + a 1-acyl-sn-glycero-3-phosphocholine. APOA1 is the most potent activator in plasma. Also activated by APOE, APOC1 and APOA4. Central enzyme in the extracellular metabolism of plasma lipoproteins. Synthesized mainly in the liver and secreted into plasma where it converts cholesterol and phosphatidylcholines (lecithins) to cholesteryl esters and lysophosphatidylcholines on the surface of high and low density lipoproteins (HDLs and LDLs). The cholesterol ester is then transported back to the liver. Has a preference for plasma 16:0-18:2 or 18:O-18:2 phosphatidylcholines. Also produced in the brain by primary astrocytes, and esterifies free cholesterol on nascent APOE-containing lipoproteins secreted from glia and influences cerebral spinal fluid (CSF) APOE- and APOA1 levels. Together with APOE and the cholesterol transporter ABCA1, plays a key role in the maturation of glial-derived, nascent lipoproteins. Required for remodeling high-density lipoprotein particles into their spherical forms. This is Phosphatidylcholine-sterol acyltransferase (LCAT) from Gerbilliscus gambianus (Gambian gerbil).